Consider the following 427-residue polypeptide: Serine--tRNA ligase (427 aa).

230–232 contributes to the L-serine binding site; that stretch reads TAE. ATP is bound at residue 261 to 263; the sequence is RAE. Glu284 is an L-serine binding site. ATP is bound at residue 348–351; the sequence is EISS. L-serine is bound at residue Ser384.

It belongs to the class-II aminoacyl-tRNA synthetase family. Type-1 seryl-tRNA synthetase subfamily. As to quaternary structure, homodimer. The tRNA molecule binds across the dimer.

It is found in the cytoplasm. The enzyme catalyses tRNA(Ser) + L-serine + ATP = L-seryl-tRNA(Ser) + AMP + diphosphate + H(+). The catalysed reaction is tRNA(Sec) + L-serine + ATP = L-seryl-tRNA(Sec) + AMP + diphosphate + H(+). The protein operates within aminoacyl-tRNA biosynthesis; selenocysteinyl-tRNA(Sec) biosynthesis; L-seryl-tRNA(Sec) from L-serine and tRNA(Sec): step 1/1. Its function is as follows. Catalyzes the attachment of serine to tRNA(Ser). Is also able to aminoacylate tRNA(Sec) with serine, to form the misacylated tRNA L-seryl-tRNA(Sec), which will be further converted into selenocysteinyl-tRNA(Sec). The sequence is that of Serine--tRNA ligase from Moorella thermoacetica (strain ATCC 39073 / JCM 9320).